The sequence spans 505 residues: Zinc finger protein 649 (505 aa).

The 72-residue stretch at 8 to 79 (LTLEDVAVDF…EDEIHSPAHP (72 aa)) folds into the KRAB domain. Lysine 112 participates in a covalent cross-link: Glycyl lysine isopeptide (Lys-Gly) (interchain with G-Cter in SUMO2). 10 C2H2-type zinc fingers span residues 178–200 (HECT…KRIH), 206–228 (HVCS…ERAH), 234–256 (HGCS…ERAH), 262–284 (YGCS…QRIH), 290–312 (HQCS…QRTH), 318–340 (HTCS…QRTH), 346–368 (YGCI…QRYH), 374–396 (FVCP…QKIH), 402–424 (YKCS…HRTH), and 430–452 (YGCD…KRIH). The tract at residues 455 to 481 (EKRGDSVKVENPSTASHSLSPSEHVQG) is disordered. The span at 465 to 477 (NPSTASHSLSPSE) shows a compositional bias: polar residues.

Belongs to the krueppel C2H2-type zinc-finger protein family. Highly expressed in heart, skeletal muscle, and brain. Lower expression in liver, lung, kidney, pancreas and placenta.

The protein resides in the nucleus. Transcriptional repressor. Regulator of transcriptional factor complexes and may suppress SRE and AP-1 transcription activities mediated by growth factor signaling pathways. This is Zinc finger protein 649 (ZNF649) from Homo sapiens (Human).